The primary structure comprises 555 residues: Glutamine--tRNA ligase (555 aa).

The 'HIGH' region signature appears at 34–44 (PEPNGYLHIGH). Residues 35–37 (EPN) and 41–47 (HIGHAKS) contribute to the ATP site. Residues aspartate 67 and tyrosine 212 each contribute to the L-glutamine site. Residues threonine 231, 261-262 (RL), and 269-271 (MSK) contribute to the ATP site. The 'KMSKS' region motif lies at 268–272 (IMSKR).

The protein belongs to the class-I aminoacyl-tRNA synthetase family. As to quaternary structure, monomer.

The protein localises to the cytoplasm. The catalysed reaction is tRNA(Gln) + L-glutamine + ATP = L-glutaminyl-tRNA(Gln) + AMP + diphosphate. The sequence is that of Glutamine--tRNA ligase from Erwinia tasmaniensis (strain DSM 17950 / CFBP 7177 / CIP 109463 / NCPPB 4357 / Et1/99).